Here is a 215-residue protein sequence, read N- to C-terminus: Short neuropeptide F (215 aa).

The first 22 residues, 1-22 (MCRINFTTLSLILVLWSGSLMS), serve as a signal peptide directing secretion. Residues 23 to 56 (EPSQNADGSIKGLYEYLLQREYAAPVSYADHQIK) constitute a propeptide that is removed on maturation. A phenylalanine amide mark is found at Phe-69 and Phe-101. Trp-129 carries the tryptophan amide modification. The residue at position 157 (Phe-157) is a Phenylalanine amide. Positions 160-215 (SDPSWAMFNEHQLDEQQFADATRQPSKTLRGDEPTSIESTEQVESEENSPSNMDEK) are excised as a propeptide. Residues 173-215 (DEQQFADATRQPSKTLRGDEPTSIESTEQVESEENSPSNMDEK) are disordered.

The protein belongs to the NPY family.

It is found in the secreted. Functionally, plays a role in controlling food intake and regulating body size. This chain is Short neuropeptide F, found in Aedes aegypti (Yellowfever mosquito).